Reading from the N-terminus, the 157-residue chain is SsrA-binding protein (157 aa).

The protein belongs to the SmpB family.

It is found in the cytoplasm. Functionally, required for rescue of stalled ribosomes mediated by trans-translation. Binds to transfer-messenger RNA (tmRNA), required for stable association of tmRNA with ribosomes. tmRNA and SmpB together mimic tRNA shape, replacing the anticodon stem-loop with SmpB. tmRNA is encoded by the ssrA gene; the 2 termini fold to resemble tRNA(Ala) and it encodes a 'tag peptide', a short internal open reading frame. During trans-translation Ala-aminoacylated tmRNA acts like a tRNA, entering the A-site of stalled ribosomes, displacing the stalled mRNA. The ribosome then switches to translate the ORF on the tmRNA; the nascent peptide is terminated with the 'tag peptide' encoded by the tmRNA and targeted for degradation. The ribosome is freed to recommence translation, which seems to be the essential function of trans-translation. The polypeptide is SsrA-binding protein (Limosilactobacillus reuteri (strain DSM 20016) (Lactobacillus reuteri)).